Here is a 324-residue protein sequence, read N- to C-terminus: Probable RuBisCO transcriptional regulator (324 aa).

One can recognise an HTH lysR-type domain in the interval 8–65 (FSLEQLRILKAIATEGSFKKAAESLYMTQPAISLQIQTLEKKLNIALFDRSGRRALMT). Positions 25–44 (FKKAAESLYMTQPAISLQIQ) form a DNA-binding region, H-T-H motif.

The protein belongs to the LysR transcriptional regulatory family.

It is found in the plastid. The protein resides in the cyanelle. Trans-acting transcriptional regulator of RuBisCO genes (rbcL and rbcS) expression. The protein is Probable RuBisCO transcriptional regulator (rbcR) of Cyanophora paradoxa.